The sequence spans 422 residues: Structural polyprotein (422 aa).

Over 1–359 (SVTEHFNVYK…WPHEIIQYYY (359 aa)) the chain is Extracellular. N-linked (GlcNAc...) asparagine; by host glycans are attached at residues asparagine 200 and asparagine 262. Residues 360-382 (GLYPAATIAAVSGXSLMALLTLA) form a helical membrane-spanning segment. The Cytoplasmic segment spans residues 383 to 422 (ATCCMLATARRKCLTPYALTPGAVVPLTLGLXXCAPRANA). 3 S-palmitoyl cysteine; by host lipidation sites follow: cysteine 385, cysteine 395, and cysteine 416. Residues 395–415 (CLTPYALTPGAVVPLTLGLXX) form a transient transmembrane before p62-6K protein processing region.

Spike glycoprotein E2: Processing of the precursor of protein E3/E2 into E2 and E3 results in a heterodimer of the spike glycoproteins E2 and E1. Spike glycoprotein E2: Spike at virion surface are constituted of three E2-E1 heterodimers. Spike glycoprotein E2: Interacts with 6K protein. Structural polyprotein: Specific enzymatic cleavages in vivo yield mature proteins. Capsid protein is auto-cleaved during polyprotein translation, unmasking a signal peptide at the N-terminus of the precursor of E3/E2. The remaining polyprotein is then targeted to the host endoplasmic reticulum, where host signal peptidase cleaves it into pE2, 6K and E1 proteins. pE2 is further processed to mature E3 and E2 by host furin in trans-Golgi vesicle. In terms of processing, spike glycoprotein E2: Palmitoylated via thioester bonds. These palmitoylations may induce disruption of the C-terminus transmembrane. This would result in the reorientation of E2 C-terminus from lumenal to cytoplasmic side. Post-translationally, spike glycoprotein E2: N-glycosylated.

The protein localises to the virion membrane. The protein resides in the host cell membrane. Its function is as follows. Spike glycoprotein E2: Plays a role in viral attachment to target host cell, by binding to the cell receptor. Synthesized as a p62 precursor which is processed by furin at the cell membrane just before virion budding, giving rise to E2-E1 heterodimer. The p62-E1 heterodimer is stable, whereas E2-E1 is unstable and dissociate at low pH. p62 is processed at the last step, presumably to avoid E1 fusion activation before its final export to cell surface. E2 C-terminus contains a transitory transmembrane that would be disrupted by palmitoylation, resulting in reorientation of the C-terminal tail from lumenal to cytoplasmic side. This step is critical since E2 C-terminus is involved in budding by interacting with capsid proteins. This release of E2 C-terminus in cytoplasm occurs lately in protein export, and precludes premature assembly of particles at the endoplasmic reticulum membrane. The chain is Structural polyprotein from Ross river virus (strain 213970) (RRV).